A 199-amino-acid chain; its full sequence is MIGKLNGKIDSHCDDYVIIDVNGVGYLVYASGKTLAKLVEGKFYKLFIETHVREEHIHLYGFLTLEEKNFFNLLQSVNGIGTKMALSILSNLTPTDIQIAINNDDRNIFKAISGVGAKLAERIMLELKDKITKIFSSSAIIKDSNISSIAINEVMKALVNLGFTRFEAQNTVQGIITQNPKISIDELIKTALKNRNSSF.

The segment at 1–63 (MIGKLNGKID…EEHIHLYGFL (63 aa)) is domain I. The tract at residues 64–141 (TLEEKNFFNL…TKIFSSSAII (78 aa)) is domain II. Positions 141–145 (IKDSN) are flexible linker. The segment at 146 to 199 (ISSIAINEVMKALVNLGFTRFEAQNTVQGIITQNPKISIDELIKTALKNRNSSF) is domain III.

Belongs to the RuvA family. As to quaternary structure, homotetramer. Forms an RuvA(8)-RuvB(12)-Holliday junction (HJ) complex. HJ DNA is sandwiched between 2 RuvA tetramers; dsDNA enters through RuvA and exits via RuvB. An RuvB hexamer assembles on each DNA strand where it exits the tetramer. Each RuvB hexamer is contacted by two RuvA subunits (via domain III) on 2 adjacent RuvB subunits; this complex drives branch migration. In the full resolvosome a probable DNA-RuvA(4)-RuvB(12)-RuvC(2) complex forms which resolves the HJ.

It is found in the cytoplasm. Functionally, the RuvA-RuvB-RuvC complex processes Holliday junction (HJ) DNA during genetic recombination and DNA repair, while the RuvA-RuvB complex plays an important role in the rescue of blocked DNA replication forks via replication fork reversal (RFR). RuvA specifically binds to HJ cruciform DNA, conferring on it an open structure. The RuvB hexamer acts as an ATP-dependent pump, pulling dsDNA into and through the RuvAB complex. HJ branch migration allows RuvC to scan DNA until it finds its consensus sequence, where it cleaves and resolves the cruciform DNA. The chain is Holliday junction branch migration complex subunit RuvA from Rickettsia prowazekii (strain Madrid E).